We begin with the raw amino-acid sequence, 199 residues long: Holliday junction branch migration complex subunit RuvA (199 aa).

The segment at 1 to 64 is domain I; the sequence is MFAYIKGTVE…EDIAVLYGFG (64 aa). The domain II stretch occupies residues 65–143; it reads TVEELTMFEM…KEQLTSSIPM (79 aa). Positions 144-151 are flexible linker; it reads TSPENNEV. Residues 152-199 are domain III; it reads TGDSVLSEAVSALMVLGYGSAEASSTISGIYEKGISVEELVKKALKSL.

It belongs to the RuvA family. In terms of assembly, homotetramer. Forms an RuvA(8)-RuvB(12)-Holliday junction (HJ) complex. HJ DNA is sandwiched between 2 RuvA tetramers; dsDNA enters through RuvA and exits via RuvB. An RuvB hexamer assembles on each DNA strand where it exits the tetramer. Each RuvB hexamer is contacted by two RuvA subunits (via domain III) on 2 adjacent RuvB subunits; this complex drives branch migration. In the full resolvosome a probable DNA-RuvA(4)-RuvB(12)-RuvC(2) complex forms which resolves the HJ.

The protein localises to the cytoplasm. In terms of biological role, the RuvA-RuvB-RuvC complex processes Holliday junction (HJ) DNA during genetic recombination and DNA repair, while the RuvA-RuvB complex plays an important role in the rescue of blocked DNA replication forks via replication fork reversal (RFR). RuvA specifically binds to HJ cruciform DNA, conferring on it an open structure. The RuvB hexamer acts as an ATP-dependent pump, pulling dsDNA into and through the RuvAB complex. HJ branch migration allows RuvC to scan DNA until it finds its consensus sequence, where it cleaves and resolves the cruciform DNA. The polypeptide is Holliday junction branch migration complex subunit RuvA (Ruminiclostridium cellulolyticum (strain ATCC 35319 / DSM 5812 / JCM 6584 / H10) (Clostridium cellulolyticum)).